The following is a 101-amino-acid chain: MIPGQYQIQPGDIELNAGRRTLSLTVANSGDRPIQVGSHFHFFETNDALTFDRAASRGMRLNIPAGTAVRFEPGQSREVELVDLAGLRKVYGFAGRVMGEL.

It belongs to the urease beta subunit family. As to quaternary structure, heterotrimer of UreA (gamma), UreB (beta) and UreC (alpha) subunits. Three heterotrimers associate to form the active enzyme.

It localises to the cytoplasm. It catalyses the reaction urea + 2 H2O + H(+) = hydrogencarbonate + 2 NH4(+). It participates in nitrogen metabolism; urea degradation; CO(2) and NH(3) from urea (urease route): step 1/1. This is Urease subunit beta from Pseudomonas syringae pv. syringae (strain B728a).